The sequence spans 256 residues: MNRINQKLQEDHKLLSIYFTAGYPDFEDTEKIIVDLEKSGVDFIEIGLPFSDPLADGPTIQKSSTKALKNGMTTSKLFEQLKGIRNKVEIPLIIMGYFNPILQYGVEDFCKKCQETGIDGLIIPDLPVDVYHEKYQELFEQYGLRNIFLITPQTSDERIHFIDSVSNGFIYMVSSASVTGSTSGFGEDTRAYFKRVNDLQLKNPQIVGFGIKDNETFNQATEYAKGAIIGSAFIKHINENGTSNVGSFVKKVKALT.

Active-site proton acceptor residues include Glu45 and Asp56.

This sequence belongs to the TrpA family. As to quaternary structure, tetramer of two alpha and two beta chains.

The enzyme catalyses (1S,2R)-1-C-(indol-3-yl)glycerol 3-phosphate + L-serine = D-glyceraldehyde 3-phosphate + L-tryptophan + H2O. It participates in amino-acid biosynthesis; L-tryptophan biosynthesis; L-tryptophan from chorismate: step 5/5. Its function is as follows. The alpha subunit is responsible for the aldol cleavage of indoleglycerol phosphate to indole and glyceraldehyde 3-phosphate. This Christiangramia forsetii (strain DSM 17595 / CGMCC 1.15422 / KT0803) (Gramella forsetii) protein is Tryptophan synthase alpha chain.